The following is a 316-amino-acid chain: MSVREKMLEILEGIDIRFKEPLHSYSYTKVGGEADYLVFPRNRFELARVVKFANQENIPWMVLGNASNIIVRDGGIRGFVILCDKLNNVSVDGYTIEAEAGANLIETTRIALRHSLTGFEFACGIPGSVGGAVFMNAGAYGGEIAHILQSCKVLTKDGEIETLSAKDLAFGYRHSAIQESGAVVLSVKFALAPGTHQVIKQEMDRLTHLRELKQPLEYPSCGSVFKRPVGHFAGQLISEAGLKGYRIGGVEVSEKHAGFMINVADGTAKDYEDLIQSVIEKVKEHSGITLEREVRILGESLSVAKMYAGGFTPCKR.

In terms of domain architecture, FAD-binding PCMH-type spans 30-194 (VGGEADYLVF…LSVKFALAPG (165 aa)). R173 is an active-site residue. S223 (proton donor) is an active-site residue. E293 is a catalytic residue.

This sequence belongs to the MurB family. It depends on FAD as a cofactor.

It localises to the cytoplasm. The catalysed reaction is UDP-N-acetyl-alpha-D-muramate + NADP(+) = UDP-N-acetyl-3-O-(1-carboxyvinyl)-alpha-D-glucosamine + NADPH + H(+). It participates in cell wall biogenesis; peptidoglycan biosynthesis. Its function is as follows. Cell wall formation. In Streptococcus pneumoniae serotype 2 (strain D39 / NCTC 7466), this protein is UDP-N-acetylenolpyruvoylglucosamine reductase.